A 511-amino-acid polypeptide reads, in one-letter code: Activin receptor type-2B (511 aa).

A signal peptide spans 1–20; it reads MGASVALTFLLLLATFRAGS. Topologically, residues 21 to 136 are extracellular; sequence GHDEVETREC…KPQPSASVLN (116 aa). Cysteine 30 and cysteine 61 are joined by a disulfide. N-linked (GlcNAc...) asparagine glycans are attached at residues asparagine 43 and asparagine 67. Intrachain disulfides connect cysteine 86–cysteine 105, cysteine 92–cysteine 104, and cysteine 106–cysteine 111. Residues 137–157 traverse the membrane as a helical segment; sequence ILIYSLLPIVGLSMAILLAFW. Residues 158–511 are Cytoplasmic-facing; that stretch reads MYRHRKPSYG…VDLPPKESSI (354 aa). Positions 189–477 constitute a Protein kinase domain; the sequence is LQLLDIKARG…LSAGCVEERI (289 aa). Residues 195–203 and lysine 216 contribute to the ATP site; that span reads KARGRFGCV. Catalysis depends on aspartate 320, which acts as the Proton acceptor.

This sequence belongs to the protein kinase superfamily. TKL Ser/Thr protein kinase family. TGFB receptor subfamily.

The protein resides in the membrane. It carries out the reaction L-threonyl-[receptor-protein] + ATP = O-phospho-L-threonyl-[receptor-protein] + ADP + H(+). It catalyses the reaction L-seryl-[receptor-protein] + ATP = O-phospho-L-seryl-[receptor-protein] + ADP + H(+). Receptor for activin A, activin B and inhibin A. Involved in transmembrane signaling. This Xenopus laevis (African clawed frog) protein is Activin receptor type-2B (acvr2b).